A 220-amino-acid chain; its full sequence is uncharacterized protein (220 aa).

The helical transmembrane segment at 10-30 (FFIIGGVILSIGLILFFLLGF) threads the bilayer.

Its subcellular location is the membrane. This is an uncharacterized protein from Methanocaldococcus jannaschii (strain ATCC 43067 / DSM 2661 / JAL-1 / JCM 10045 / NBRC 100440) (Methanococcus jannaschii).